The primary structure comprises 359 residues: DNA polymerase IV (359 aa).

A UmuC domain is found at Ile-4–Gly-184. The Mg(2+) site is built by Asp-8 and Asp-102. Glu-103 is an active-site residue.

Belongs to the DNA polymerase type-Y family. Monomer. Requires Mg(2+) as cofactor.

It is found in the cytoplasm. The catalysed reaction is DNA(n) + a 2'-deoxyribonucleoside 5'-triphosphate = DNA(n+1) + diphosphate. In terms of biological role, poorly processive, error-prone DNA polymerase involved in untargeted mutagenesis. Copies undamaged DNA at stalled replication forks, which arise in vivo from mismatched or misaligned primer ends. These misaligned primers can be extended by PolIV. Exhibits no 3'-5' exonuclease (proofreading) activity. May be involved in translesional synthesis, in conjunction with the beta clamp from PolIII. The protein is DNA polymerase IV of Xanthomonas campestris pv. campestris (strain 8004).